A 325-amino-acid chain; its full sequence is Fructose-1,6-bisphosphatase class 1 (325 aa).

Positions 84, 103, 105, and 106 each coordinate Mg(2+). Substrate contacts are provided by residues D106–S109, N196, and K262. A Mg(2+)-binding site is contributed by E268.

The protein belongs to the FBPase class 1 family. As to quaternary structure, homotetramer. Requires Mg(2+) as cofactor.

The protein localises to the cytoplasm. The catalysed reaction is beta-D-fructose 1,6-bisphosphate + H2O = beta-D-fructose 6-phosphate + phosphate. The protein operates within carbohydrate biosynthesis; gluconeogenesis. The sequence is that of Fructose-1,6-bisphosphatase class 1 from Shewanella oneidensis (strain ATCC 700550 / JCM 31522 / CIP 106686 / LMG 19005 / NCIMB 14063 / MR-1).